A 37-amino-acid chain; its full sequence is Large ribosomal subunit protein bL36 (37 aa).

The protein belongs to the bacterial ribosomal protein bL36 family.

In Rippkaea orientalis (strain PCC 8801 / RF-1) (Cyanothece sp. (strain PCC 8801)), this protein is Large ribosomal subunit protein bL36.